The primary structure comprises 399 residues: MSLTKSSESVFTEEEEEDSFSGRYTLWIKEALEELPHNFTITDPFISGHPIVFASLGFLKMTGYSREEVIGRNGKVFQGPKTNRRSIMEIREAIREERSVQVSLLNYRKSGSPFWMLFHMCPVFGKDDGKVTNFVAVQVPISGREHHRKKLRNVGDLSSDTSPTFGSCRREVCFGNFVCQDRALPVECDDDEQGLEDWEQCEASESEKLKATEAINNVLSILVHYSELSGRLVCGKRYCLRGVDCLSSSLVISLGRIKQSFVLTNPCLPDMPIIYASDAFLTLTGYKRQEVLGQNCRFLSGVDTDSSVLYEMKECILKGQSCTVQILNYSNRKDKSSFWNLLHISPVRNASGKTAYFVGVQVEASCRNTEIKELRPETRQLSVVGAVRVAVRSSLMVTC.

The PAS 1 domain occupies 26–97 (LWIKEALEEL…MEIREAIREE (72 aa)). Residues 98–153 (RSVQVSLLNYRKSGSPFWMLFHMCPVFGKDDGKVTNFVAVQVPISGREHHRKKLRN) enclose the PAC 1 domain. Residues 249–320 (SLVISLGRIK…EMKECILKGQ (72 aa)) form the PAS 2 domain. Cys296 is modified (S-4a-FMN cysteine). The PAC 2 domain maps to 320–376 (QSCTVQILNYSNRKDKSSFWNLLHISPVRNASGKTAYFVGVQVEASCRNTEIKELRP).

As to quaternary structure, interacts with VTC2, VTC5 and BLH10. Post-translationally, FMN binds covalently to cysteine after exposure to blue light and is reversed in the dark.

The chain is Protein TWIN LOV 1 (TLP1) from Arabidopsis thaliana (Mouse-ear cress).